Here is a 521-residue protein sequence, read N- to C-terminus: NAD(P)H-quinone oxidoreductase subunit 2 (521 aa).

14 helical membrane passes run 14–34 (VILP…TDLI), 42–62 (LTPA…TLQW), 79–99 (LSIV…LLSI), 109–129 (LGEF…LSGA), 132–152 (LVTI…LTGY), 167–187 (LLIG…LYGL), 207–227 (LALL…ISAV), 241–261 (PTPI…ALAI), 275–295 (WHFV…VVAL), 303–323 (LLAY…IAGT), 331–351 (VYYL…VILF), 375–395 (LGLS…GFFG), 397–417 (LYLF…LALI), and 463–483 (AGLV…NPLF).

It belongs to the complex I subunit 2 family. NDH-1 can be composed of about 15 different subunits; different subcomplexes with different compositions have been identified which probably have different functions.

The protein resides in the cellular thylakoid membrane. The enzyme catalyses a plastoquinone + NADH + (n+1) H(+)(in) = a plastoquinol + NAD(+) + n H(+)(out). It catalyses the reaction a plastoquinone + NADPH + (n+1) H(+)(in) = a plastoquinol + NADP(+) + n H(+)(out). In terms of biological role, NDH-1 shuttles electrons from an unknown electron donor, via FMN and iron-sulfur (Fe-S) centers, to quinones in the respiratory and/or the photosynthetic chain. The immediate electron acceptor for the enzyme in this species is believed to be plastoquinone. Couples the redox reaction to proton translocation, and thus conserves the redox energy in a proton gradient. Cyanobacterial NDH-1 also plays a role in inorganic carbon-concentration. The sequence is that of NAD(P)H-quinone oxidoreductase subunit 2 from Synechococcus elongatus (strain ATCC 33912 / PCC 7942 / FACHB-805) (Anacystis nidulans R2).